A 182-amino-acid chain; its full sequence is Ribosome-recycling factor (182 aa).

It belongs to the RRF family.

The protein resides in the cytoplasm. In terms of biological role, responsible for the release of ribosomes from messenger RNA at the termination of protein biosynthesis. May increase the efficiency of translation by recycling ribosomes from one round of translation to another. This is Ribosome-recycling factor from Synechococcus sp. (strain CC9605).